Here is a 185-residue protein sequence, read N- to C-terminus: Protein PBP4 (185 aa).

Low complexity-rich tracts occupy residues 1 to 24 (MTTT…LSAS) and 46 to 62 (AQAA…QQQQ). 2 disordered regions span residues 1-116 (MTTT…YNRE) and 147-168 (ETAS…SKNK). 3 stretches are compositionally biased toward polar residues: residues 73–83 (PANTKTKTIAS), 91–102 (KGSSTANGSSTN), and 147–166 (ETAS…SSSK).

As to quaternary structure, interacts with IGO1, LSM12 and PBP1.

The protein resides in the cytoplasm. Its subcellular location is the nucleus. This is Protein PBP4 (PBP4) from Saccharomyces cerevisiae (strain ATCC 204508 / S288c) (Baker's yeast).